A 486-amino-acid polypeptide reads, in one-letter code: MATFKDACYHYKRINKLNHTVLKLGVNDTWRSSPPTKYKGWCLDCCQHTDLTYCRGCTMYHVCQWCSQYGRCFLDNEPHLLRMRTFKNEVTKDDLKNLIDMYEILFPMNQKIVCRFINNTRQHKCRNECMTQWYNHLLLPITLQSMSIELDGDVYYVFGYYDNMNSINQTPFSFTNLVDIYDKLLLDDVNFARMSFLPASLQQEYALRYFSKSRFISEQRKCVNDSHFSINVLENLHNPSFKVQITRNCSELSFDWNEACKLVKNVSAYFDMLKTSHIEFYSVSTRCRIFTQCKLKMASKLIKPNYITSNHKTLATEVHNCKWCSVNNSYTVWNDFRIKKIYDNIFNFLRALVKSNVNIGHCSSQEKIYEYVEDVLNVCDDERWKTSIMEIFNCLEPVELDDVKYVLFNHEINWDVINVLVHSIGKVPQILTLENVITIMQSIIYEWFDIRYMRNTPMVTFTIDKLRRLHTGLKTVEYDSGISDIE.

Positions 1-81 (MATFKDACYH…CFLDNEPHLL (81 aa)) are RNA-binding. Positions 42–79 (CLDCCQHTDLTYCRGCTMYHVCQWCSQYGRCFLDNEPH) are zinc-binding domain. The segment at 82 to 176 (RMRTFKNEVT…INQTPFSFTN (95 aa)) is important for cytoskeleton localization. The interaction with host IRF3 stretch occupies residues 317–486 (EVHNCKWCSV…EYDSGISDIE (170 aa)). Positions 479–483 (DSGIS) match the IKBKB-like degron (ILD) motif motif. Positions 480–483 (SGIS) match the pLxIS motif motif.

It belongs to the rotavirus NSP1 family. Interacts (via C-terminus) with host IRF3; this interaction leads to IRF3 degradation. Interacts with host IRF7; this interaction leads to IRF7 degradation. Interacts with host CUL1 and CUL3. Interacts with host BTRC. In terms of processing, the C-terminal region is phosphorylated by host CKII/CSNK2A1. Phosphorylation of the DSGXS motif is essential for host NF-kappa-B inhibition.

It is found in the host cytoplasm. It localises to the host cytoskeleton. In terms of biological role, plays a role in the inhibition of host innate immunity by inducing the degradation of key host factors required to activate interferon production such as IRF3, IRF5 or IRF7. Associates with components of cullin RING ligases (CRLs) including CUL1 or CUL3, which are essential multisubunit ubiquitination complexes, to modulate their activities. Recognizes the host NF-kappa-B regulator BTRC through the presence of a DSGXS motif in the C-terminal substrate recognition domain. This chain is Non-structural protein 1, found in Homo sapiens (Human).